Reading from the N-terminus, the 286-residue chain is Pollen allergen Phl p 5a (286 aa).

The segment covering 1 to 34 (ADLGYGPATPAAPAAGYTPATPAAPAGADAAGKA) has biased composition (low complexity). The segment at 1-35 (ADLGYGPATPAAPAAGYTPATPAAPAGADAAGKAT) is disordered.

It belongs to the Poa p IX/Phl p VI allergen family.

The protein localises to the secreted. In Phleum pratense (Common timothy), this protein is Pollen allergen Phl p 5a.